The chain runs to 212 residues: 2-dehydro-3-deoxy-phosphogluconate aldolase (212 aa).

E45 serves as the catalytic Proton acceptor. Residues R49, T73, and K133 each coordinate pyruvate. The Schiff-base intermediate with substrate role is filled by K133.

The protein belongs to the KHG/KDPG aldolase family. In terms of assembly, homotrimer.

The protein localises to the cytoplasm. It catalyses the reaction 2-dehydro-3-deoxy-6-phospho-D-gluconate = D-glyceraldehyde 3-phosphate + pyruvate. The protein operates within carbohydrate acid metabolism; 2-dehydro-3-deoxy-D-gluconate degradation; D-glyceraldehyde 3-phosphate and pyruvate from 2-dehydro-3-deoxy-D-gluconate: step 2/2. Its function is as follows. Involved in the degradation of glucose via the Entner-Doudoroff pathway. Catalyzes the reversible, stereospecific retro-aldol cleavage of 2-keto-3-deoxy-6-phosphogluconate (KDPG) to pyruvate and D-glyceraldehyde-3-phosphate. This Haemophilus influenzae (strain ATCC 51907 / DSM 11121 / KW20 / Rd) protein is 2-dehydro-3-deoxy-phosphogluconate aldolase (eda).